Here is a 121-residue protein sequence, read N- to C-terminus: MTGTESRAEIGALGEQLAVDYLQGLGLRVLARNWRCRYGELDVIAADGRAVVFIEVKTRTTDRFGGVAQAVTPTKVRRLRRLAGVWLAQQPGHWAAVRIDVVTVRIGRRRVPEVTHIKGVA.

This sequence belongs to the UPF0102 family.

The sequence is that of UPF0102 protein Mvan_2202 from Mycolicibacterium vanbaalenii (strain DSM 7251 / JCM 13017 / BCRC 16820 / KCTC 9966 / NRRL B-24157 / PYR-1) (Mycobacterium vanbaalenii).